A 196-amino-acid polypeptide reads, in one-letter code: Somatotropin (196 aa).

An N-terminal signal peptide occupies residues 1–18; that stretch reads MEKVVLLLSVLSLGVVCP. A Pyrrolidone carboxylic acid modification is found at Gln-19. Residue His-35 participates in Zn(2+) binding. An intrachain disulfide couples Cys-69 to Cys-169. Glu-178 is a binding site for Zn(2+). Cys-186 and Cys-194 form a disulfide bridge.

It belongs to the somatotropin/prolactin family.

The protein localises to the secreted. Its function is as follows. Growth hormone plays an important role in growth control and is involved in the regulation of several anabolic processes. Implicated as an osmoregulatory substance important for seawater adaptation. This chain is Somatotropin (gh), found in Siganus guttatus (Orange-spotted spinefoot).